Here is a 328-residue protein sequence, read N- to C-terminus: Alpha-tubulin N-acetyltransferase 2 (328 aa).

The N-acetyltransferase domain maps to 5-185 (SQVALLPKLS…NNFVVFHRYF (181 aa)). Acetyl-CoA is bound by residues 119–132 (FFVD…GFGK) and 155–164 (SVKFLAFLRK). Disordered stretches follow at residues 219-261 (EYQS…PGKK) and 282-328 (GGDP…TPEH). A compositionally biased stretch (pro residues) spans 238 to 248 (TPPPPLPPPLV). Residues 312 to 328 (PTRSGVQYNIISGTPEH) show a composition bias toward polar residues.

This sequence belongs to the acetyltransferase ATAT1 family.

It carries out the reaction L-lysyl-[alpha-tubulin] + acetyl-CoA = N(6)-acetyl-L-lysyl-[alpha-tubulin] + CoA + H(+). Specifically acetylates 'Lys-40' in alpha-tubulin on the lumenal side of microtubules. Promotes microtubule destabilization and accelerates microtubule dynamics; this activity may be independent of acetylation activity. Acetylates alpha-tubulin with a slow enzymatic rate, due to a catalytic site that is not optimized for acetyl transfer. Enters the microtubule through each end and diffuses quickly throughout the lumen of microtubules. Acetylates only long/old microtubules because of its slow acetylation rate since it does not have time to act on dynamically unstable microtubules before the enzyme is released. In Trypanosoma cruzi (strain CL Brener), this protein is Alpha-tubulin N-acetyltransferase 2.